Consider the following 182-residue polypeptide: Plasmolipin (182 aa).

The Cytoplasmic segment spans residues 1-35 (MAEFPSKVSTRTSSPAQGVGASVSALRPDLGFVRS). Ser-9 carries the phosphoserine modification. Residues 32–166 (FVRSALGVLA…SAFFSFQAWR (135 aa)) form the MARVEL domain. A helical transmembrane segment spans residues 36–56 (ALGVLALLQLALGLLVWALIA). The Extracellular portion of the chain corresponds to 57-68 (DTPYHLYPAYGW). Residues 69-89 (VMFVAVFLWLVTIVFFIIYLF) traverse the membrane as a helical segment. Over 90–99 (QLHMKLYMVP) the chain is Cytoplasmic. Residues 100–120 (WPLVLLIFFVAATVLYITAFI) form a helical membrane-spanning segment. The Extracellular portion of the chain corresponds to 121-141 (ACAAAVDLTSLRGSRPYNQRS). A helical transmembrane segment spans residues 142–162 (AASFFACLVMIAYGVSAFFSF). Topologically, residues 163-182 (QAWRGVGSNAATSQMAGGYS) are cytoplasmic.

Belongs to the MAL family. In terms of assembly, forms oligomers. Phosphorylated.

The protein localises to the membrane. The protein resides in the cell membrane. It is found in the myelin membrane. Its subcellular location is the apical cell membrane. Main component of the myelin sheath that plays an important role in myelin membrane biogenesis and myelination. Plays an essential function in apical endocytosis. Regulates epithelial development through the regulation of apical endocytosis. Part of the intracellular machinery that mediates basolateral-to-apical transport of ICAM-1, an essential adhesion receptor in epithelial cells, from the subapical compartment in hepatic epithelial cells. The sequence is that of Plasmolipin (Pllp) from Mus musculus (Mouse).